We begin with the raw amino-acid sequence, 138 residues long: Glutaredoxin-C7 (138 aa).

The interval 17-40 (SSTRGGGGGGMLGLTLFDPPGGEQ) is disordered. One can recognise a Glutaredoxin domain in the interval 42–137 (AERIGRLVRE…PRLREVGALC (96 aa)). Cys-62 and Cys-65 are disulfide-bonded.

It belongs to the glutaredoxin family. CC-type subfamily.

The protein resides in the cytoplasm. Functionally, has a glutathione-disulfide oxidoreductase activity in the presence of NADPH and glutathione reductase. Reduces low molecular weight disulfides and proteins. In Oryza sativa subsp. japonica (Rice), this protein is Glutaredoxin-C7 (GRXC7).